A 165-amino-acid chain; its full sequence is Phosphopantetheine adenylyltransferase (165 aa).

Substrate is bound at residue Ser9. ATP is bound by residues 9 to 10 (SF) and His17. Residues Lys41, Ile75, and Arg89 each coordinate substrate. ATP contacts are provided by residues 90–92 (GVR), Glu100, and 125–131 (YLFVRSD).

It belongs to the bacterial CoaD family. In terms of assembly, homohexamer. Mg(2+) is required as a cofactor.

The protein resides in the cytoplasm. The enzyme catalyses (R)-4'-phosphopantetheine + ATP + H(+) = 3'-dephospho-CoA + diphosphate. The protein operates within cofactor biosynthesis; coenzyme A biosynthesis; CoA from (R)-pantothenate: step 4/5. Functionally, reversibly transfers an adenylyl group from ATP to 4'-phosphopantetheine, yielding dephospho-CoA (dPCoA) and pyrophosphate. This is Phosphopantetheine adenylyltransferase from Borrelia turicatae (strain 91E135).